Reading from the N-terminus, the 118-residue chain is Hisactophilin-2 (118 aa).

The N-myristoyl glycine moiety is linked to residue G2. Residues 8-109 (AHNGHYLSAE…HVSTSHHHDH (102 aa)) are contains several HHXH repeats. Repeat copies occupy residues 34 to 46 (FHIE…VALR) and 74 to 86 (FHLE…VSIK). Positions 34-86 (FHIENHGSKVALRTHCGKYVSIGDHKQVYLSHHLHGDHSLFHLEHHHGKVSIK) are 2 X 13 AA approximate repeats. Positions 99–118 (GHVSTSHHHDHHATFEEHIL) are disordered.

Belongs to the hisactophilin family. In terms of assembly, homodimer or heterodimer of hatA and hatB, linked by a disulfide bond. Post-translationally, phosphorylated.

The protein resides in the cytoplasm. Its subcellular location is the cell membrane. May act as an intracellular pH sensor that links chemotactic signals to responses in the microfilament system of the cells by nucleating actin polymerization or stabilizing the filaments. This Dictyostelium discoideum (Social amoeba) protein is Hisactophilin-2 (hatB).